Consider the following 161-residue polypeptide: Protein ZMO0507 (161 aa).

It belongs to the free Met sulfoxide reductase family.

This Zymomonas mobilis subsp. mobilis (strain ATCC 31821 / ZM4 / CP4) protein is Protein ZMO0507.